Consider the following 269-residue polypeptide: Phosphoribosylformylglycinamidine synthase subunit PurQ (269 aa).

Residues Val-5 to Asn-262 form the Glutamine amidotransferase type-1 domain. Catalysis depends on Cys-95, which acts as the Nucleophile. Residues His-222, Glu-224, and Glu-232 contribute to the active site.

As to quaternary structure, part of the FGAM synthase complex composed of 1 PurL, 1 PurQ and 2 PurS subunits.

Its subcellular location is the cytoplasm. The catalysed reaction is N(2)-formyl-N(1)-(5-phospho-beta-D-ribosyl)glycinamide + L-glutamine + ATP + H2O = 2-formamido-N(1)-(5-O-phospho-beta-D-ribosyl)acetamidine + L-glutamate + ADP + phosphate + H(+). The enzyme catalyses L-glutamine + H2O = L-glutamate + NH4(+). Its pathway is purine metabolism; IMP biosynthesis via de novo pathway; 5-amino-1-(5-phospho-D-ribosyl)imidazole from N(2)-formyl-N(1)-(5-phospho-D-ribosyl)glycinamide: step 1/2. Part of the phosphoribosylformylglycinamidine synthase complex involved in the purines biosynthetic pathway. Catalyzes the ATP-dependent conversion of formylglycinamide ribonucleotide (FGAR) and glutamine to yield formylglycinamidine ribonucleotide (FGAM) and glutamate. The FGAM synthase complex is composed of three subunits. PurQ produces an ammonia molecule by converting glutamine to glutamate. PurL transfers the ammonia molecule to FGAR to form FGAM in an ATP-dependent manner. PurS interacts with PurQ and PurL and is thought to assist in the transfer of the ammonia molecule from PurQ to PurL. The sequence is that of Phosphoribosylformylglycinamidine synthase subunit PurQ from Methanococcus maripaludis (strain C5 / ATCC BAA-1333).